Consider the following 399-residue polypeptide: C-type lectin domain family 4 member M (399 aa).

Residues 1-49 (MSDSKEQRVQPLGLLEEDPTTSGIRLFPRDFQFQQTHGHKSSTGCLGHG) lie on the Cytoplasmic side of the membrane. The Endocytosis signal motif lies at 14–15 (LL). The chain crosses the membrane as a helical; Signal-anchor for type II membrane protein span at residues 50–70 (PLVLQLLSFTLLAGFLVAILV). The Extracellular segment spans residues 71–399 (QVYKGPSSLS…KKPTACFRDE (329 aa)). Asn-92 is a glycosylation site (N-linked (GlcNAc...) asparagine). 7 tandem repeats follow at residues 108–130 (KLQEIYQELTQLKAAVGELPEKS), 131–153 (RLQEIYQELTRLKAAVGELPENS), 154–176 (RLQEIYQELTQLKAAVGELPEKS), 177–199 (KQQEIYQELTRLKAAVGELPEKS), 200–222 (KQQEIYQELTRLKAAVGELPEKS), 223–245 (KQQEIYQELTRLKAAVGELPDQS), and 246–268 (KQQQIYQELTDLKTAFERLCCRC). The 7 X approximate tandem repeats stretch occupies residues 108–269 (KLQEIYQELT…AFERLCCRCP (162 aa)). Cystine bridges form between Cys-265–Cys-395, Cys-268–Cys-279, Cys-296–Cys-389, and Cys-368–Cys-381. The 117-residue stretch at 274 to 390 (FFQGNCYFIS…CNVDNYWICK (117 aa)) folds into the C-type lectin domain. Positions 359, 361, 363, 366, 377, and 378 each coordinate Ca(2+). Asn-361 carries an N-linked (GlcNAc...) asparagine glycan.

As to quaternary structure, homotetramer.

Its subcellular location is the membrane. Probable pathogen-recognition receptor involved in peripheral immune surveillance in liver. May mediate the endocytosis of pathogens which are subsequently degraded in lysosomal compartments. Probably recognizes in a calcium-dependent manner high mannose N-linked oligosaccharides in a variety of pathogen antigens. Is a receptor for ICAM3, probably by binding to mannose-like carbohydrates. This chain is C-type lectin domain family 4 member M (CLEC4M), found in Nomascus concolor (Black crested gibbon).